We begin with the raw amino-acid sequence, 98 residues long: DNA-binding protein Fis (98 aa).

The segment at residues 74–93 (QTRAATMMGINRGTLRKKLK) is a DNA-binding region (H-T-H motif).

It belongs to the transcriptional regulatory Fis family. In terms of assembly, homodimer.

In terms of biological role, activates ribosomal RNA transcription. Plays a direct role in upstream activation of rRNA promoters. The polypeptide is DNA-binding protein Fis (Vibrio atlanticus (strain LGP32) (Vibrio splendidus (strain Mel32))).